The primary structure comprises 480 residues: Ribosome assembly protein rrb1 (480 aa).

Disordered stretches follow at residues 1-78 (MSKR…WLPG) and 155-176 (QHDENDDASDNSDVEEDPILEH). Acidic residues-rich tracts occupy residues 28–52 (VDTEMGEFEDAYEDEIESEEEYIEA) and 158–172 (ENDDASDNSDVEEDP). A phosphoserine mark is found at S163 and S166. WD repeat units lie at residues 183–225 (GACN…RSLD), 289–329 (SHTA…KTSA), 334–375 (AHPG…SSSS), 385–425 (WHRA…DEEE), and 446–480 (MGQQEIKEMHWHRQIPGTIVSTAMTGINVFKTITF).

Associates with ribosomal protein L3.

Its subcellular location is the cytoplasm. The protein localises to the nucleus. The protein resides in the nucleolus. Involved in regulation of L3 expression and stability and plays a role in early 60S ribosomal subunit assembly. May be required for proper assembly of pre-ribosomal particles during early ribosome biogenesis, presumably by targeting L3 onto the 35S precursor rRNA. In Schizosaccharomyces pombe (strain 972 / ATCC 24843) (Fission yeast), this protein is Ribosome assembly protein rrb1 (rrb1).